The primary structure comprises 289 residues: Xyloglucan endotransglucosylase/hydrolase protein 15 (289 aa).

Positions 1–25 are cleaved as a signal peptide; it reads MGPSSSLTTIVATVLLVTLFGSAYA. The 191-residue stretch at 26–216 folds into the GH16 domain; that stretch reads SNFFDEFDLT…WSKAPFTAYY (191 aa). Glutamate 102 (nucleophile) is an active-site residue. Residue glutamate 106 is the Proton donor of the active site. A xyloglucan-binding site is contributed by glutamate 106. The N-linked (GlcNAc...) asparagine glycan is linked to asparagine 110. Xyloglucan contacts are provided by residues 119-121, 129-131, 195-196, and glycine 200; these read HTN, DRE, and DW. 2 disulfide bridges follow: cysteine 224/cysteine 230 and cysteine 270/cysteine 284. Arginine 275 lines the xyloglucan pocket.

Belongs to the glycosyl hydrolase 16 family. XTH group 2 subfamily. Contains at least one intrachain disulfide bond essential for its enzymatic activity. As to expression, strongly expressed in roots, hypocotyls and cotyledons. Aslo detected in inflorescence stems and in the carpels and styles in flowers.

It is found in the secreted. The protein localises to the cell wall. The protein resides in the extracellular space. It localises to the apoplast. The catalysed reaction is breaks a beta-(1-&gt;4) bond in the backbone of a xyloglucan and transfers the xyloglucanyl segment on to O-4 of the non-reducing terminal glucose residue of an acceptor, which can be a xyloglucan or an oligosaccharide of xyloglucan.. It catalyses the reaction xyloglucan + H2O = xyloglucan oligosaccharides.. Functionally, catalyzes xyloglucan endohydrolysis (XEH) and/or endotransglycosylation (XET). Cleaves and religates xyloglucan polymers, an essential constituent of the primary cell wall, and thereby participates in cell wall construction of growing tissues. Has a high XET activity, but little or no XEH activity in vitro. Acceptor preferences are XXXGol &gt; XLLGol = XLFGol &gt; XXLGol &gt; XXFGol. This is Xyloglucan endotransglucosylase/hydrolase protein 15 from Arabidopsis thaliana (Mouse-ear cress).